The primary structure comprises 1057 residues: Hemophilin receptor (1057 aa).

The region spanning 168 to 285 is the TBDR plug domain; the sequence is KVYDANRSSV…VGGAVVVKTL (118 aa). The TBDR beta-barrel domain occupies 296–1057; it reads SFGAELKVEG…TMKISWTTKF (762 aa).

The protein belongs to the TonB-dependent receptor family.

The protein resides in the cell outer membrane. In terms of biological role, part of a high affinity heme acquisition system. Functions as a gateway for heme entry into the bacterial cell, enabling growth on hemoprotein sources. Can acquire heme directly from hemoprotein reservoirs, however, HphA likely enhances the efficiency of this process by delivering heme to HphR. Is essential for virulence, bacterial dissemination and growth in the blood. This chain is Hemophilin receptor, found in Acinetobacter baumannii.